The chain runs to 287 residues: Melatonin receptor type 1B-A (287 aa).

The Extracellular segment spans residues 1 to 28 (MPENVSLIRNRTEVGQGRAWGSGAGARP). N-linked (GlcNAc...) asparagine glycans are attached at residues N4 and N10. The helical transmembrane segment at 29–49 (AWVVMVLAGVLIFTSVVDVLG) threads the bilayer. Over 50 to 69 (NVLVIISVLRNRKLRNAGNA) the chain is Cytoplasmic. A helical membrane pass occupies residues 70–90 (FVVSLAFADLLVVCYPYPLVL). The Extracellular portion of the chain corresponds to 91-107 (HAMLHAGWLPGEMECKV). C105 and C182 are oxidised to a cystine. The helical transmembrane segment at 108–128 (SGFLMGASVIGSIFNITAIAI) threads the bilayer. At 129 to 149 (NRYCFICQANTYEKIYGRAGT) the chain is on the cytoplasmic side. A helical membrane pass occupies residues 150 to 170 (LVLLTLVWVLTAIAILPNLSL). The Extracellular portion of the chain corresponds to 171–192 (GSLTYDPRVYSCTFSQTTSAGY). Residues 193-213 (TIAVVTVHFLLPIAVVTFCYL) traverse the membrane as a helical segment. Residues 214–245 (RIWVLVLRVRRRVTTDVRPRLRPSELRHFLTM) lie on the Cytoplasmic side of the membrane. A helical transmembrane segment spans residues 246–266 (FVVFVLFAVCWAPLNLIGLAV). The Extracellular portion of the chain corresponds to 267-275 (AVDPPRVGP). Residues 276-287 (LVPDWLFVMSYF) form a helical membrane-spanning segment.

This sequence belongs to the G-protein coupled receptor 1 family.

It localises to the cell membrane. High affinity receptor for melatonin. The activity of this receptor is mediated by pertussis toxin sensitive G proteins that inhibits adenylate cyclase activity. This is Melatonin receptor type 1B-A (mtnr1ba) from Danio rerio (Zebrafish).